Here is an 821-residue protein sequence, read N- to C-terminus: Cation/H(+) antiporter 15 (821 aa).

13 helical membrane passes run 37–57 (LPLF…FVFI), 65–82 (RVIS…SVLG), 97–117 (VMVL…LVGV), 131–151 (ALTI…AFSF), 166–186 (ILFL…RILA), 200–220 (MSAA…AIAL), 228–248 (FASL…VFVV), 268–288 (FHIC…DAIG), 292–312 (VFGA…LTLI), 318–338 (FVSG…TNIA), 350–370 (FLVI…VAFF), 378–398 (GITL…VLNV), and 410–430 (FATM…IVTI). The tract at residues 800 to 821 (DFPESPVHSHETKVTYGLENPR) is disordered.

Belongs to the monovalent cation:proton antiporter 2 (CPA2) transporter (TC 2.A.37) family. CHX (TC 2.A.37.4) subfamily. In terms of tissue distribution, specifically expressed in pollen.

It localises to the membrane. May operate as a cation/H(+) antiporter. In Arabidopsis thaliana (Mouse-ear cress), this protein is Cation/H(+) antiporter 15 (CHX15).